We begin with the raw amino-acid sequence, 128 residues long: Fluoride-specific ion channel FluC (128 aa).

The next 4 helical transmembrane spans lie at 4 to 24 (LLLV…VGVQ), 37 to 57 (TFIV…WLAL), 72 to 92 (VGVM…ALMI), and 101 to 121 (FTYT…GLLI). Na(+) contacts are provided by glycine 76 and threonine 79.

This sequence belongs to the fluoride channel Fluc/FEX (TC 1.A.43) family.

It is found in the cell inner membrane. It carries out the reaction fluoride(in) = fluoride(out). Its activity is regulated as follows. Na(+) is not transported, but it plays an essential structural role and its presence is essential for fluoride channel function. In terms of biological role, fluoride-specific ion channel. Important for reducing fluoride concentration in the cell, thus reducing its toxicity. This is Fluoride-specific ion channel FluC from Caulobacter sp. (strain K31).